The primary structure comprises 224 residues: Response regulator protein GraR (224 aa).

Residues 2 to 115 form the Response regulatory domain; it reads DILLVEDDMT…VLIAKLQAIY (114 aa). Asp51 is subject to 4-aspartylphosphate. Positions 126–224 form a DNA-binding region, ompR/PhoB-type; it reads KRVLSWQDAI…KIGKGYMAHG (99 aa).

Phosphorylated by GraS.

It is found in the cytoplasm. Functionally, member of the two-component regulatory system GraR/GraS involved in resistance against cationic antimicrobial peptides (CAMPs). The protein is Response regulator protein GraR (graR) of Staphylococcus saprophyticus subsp. saprophyticus (strain ATCC 15305 / DSM 20229 / NCIMB 8711 / NCTC 7292 / S-41).